We begin with the raw amino-acid sequence, 280 residues long: MEIFSASASLTLTGFVPRLLPLLSPQARTTLCKPLLSSSSTRLISCHSRIAPSRSLADQSASTGISVVDSDPIDVVKRKAMDIAPELKGASIFLVGINNSIKTNTGKLLAEALRYYYFDSDNLITEAAGGNVSAQALKEADEKAFQESETEVLKQLSSMGRLVVCAGDGAVQSLRNLALLRHGISIWIDVPLDITAKGDDDSFHSEPSPELFDTLKASYEKSRKGYETADVSISLEKIATKLEFEDLEAVTSEDIALEILKEIEKLTRVKKMMEEASRPF.

A chloroplast-targeting transit peptide spans Met1 to Arg54.

Belongs to the shikimate kinase family.

The protein localises to the plastid. It localises to the chloroplast. Functionally, required for chloroplast biogenesis. The polypeptide is Probable inactive shikimate kinase like 1, chloroplastic (SKL1) (Arabidopsis thaliana (Mouse-ear cress)).